A 434-amino-acid polypeptide reads, in one-letter code: Alpha-enolase (434 aa).

Ser40 lines the Mg(2+) pocket. The substrate site is built by His158 and Glu167. Glu210 serves as the catalytic Proton donor. Asp245, Glu293, and Asp318 together coordinate Mg(2+). Glu293 and Asp318 together coordinate substrate. Lys343 serves as the catalytic Proton acceptor. Residues 370–373 (SHRS) and Lys394 contribute to the substrate site.

It belongs to the enolase family. Homodimer. The cofactor is Mg(2+).

It localises to the cytoplasm. The catalysed reaction is (2R)-2-phosphoglycerate = phosphoenolpyruvate + H2O. The protein operates within carbohydrate degradation; glycolysis; pyruvate from D-glyceraldehyde 3-phosphate: step 4/5. The polypeptide is Alpha-enolase (Python regius (Ball python)).